The sequence spans 266 residues: Protein STAY-GREEN homolog, chloroplastic (266 aa).

Residues 1-50 (MGTLTASLVAPSKLNPEKHSSLFVYKTRRKSHKNQSIVPVARLFGPAIFE) constitute a chloroplast transit peptide.

The protein belongs to the staygreen family.

It is found in the plastid. Its subcellular location is the chloroplast. In terms of biological role, required to trigger chlorophyll degradation during leaf senescence and fruit ripening. In Capsicum annuum (Capsicum pepper), this protein is Protein STAY-GREEN homolog, chloroplastic.